The sequence spans 162 residues: Chemoreceptor glutamine deamidase CheD (162 aa).

Belongs to the CheD family. As to quaternary structure, forms a complex with CheC.

It catalyses the reaction L-glutaminyl-[protein] + H2O = L-glutamyl-[protein] + NH4(+). Deamidates glutamine residues to glutamate on methyl-accepting chemotaxis receptors (MCPs). CheD-mediated MCP deamidation is required for productive communication of the conformational signals of the chemoreceptors to the CheA kinase. The polypeptide is Chemoreceptor glutamine deamidase CheD (Halalkalibacterium halodurans (strain ATCC BAA-125 / DSM 18197 / FERM 7344 / JCM 9153 / C-125) (Bacillus halodurans)).